The following is a 590-amino-acid chain: Glutathione S-transferase T3 (590 aa).

The GST N-terminal domain maps to 1 to 82 (MKLKVYADRM…YLSSAYPSVV (82 aa)). Residues 11–12 (SQ), 40–41 (QL), 53–54 (KV), and 66–67 (ES) each bind glutathione. One can recognise a GST C-terminal domain in the interval 89–232 (DLSKRARIHS…KDRCQKQREM (144 aa)). The Myb-like domain occupies 265–336 (DRRKHRRKWS…HCKQRWSKLN (72 aa)). A disordered region spans residues 402 to 427 (SKGGGSSKRTKLNNGDRVYSSSSNPE).

It belongs to the GST superfamily. Theta family.

The protein resides in the nucleus. The enzyme catalyses RX + glutathione = an S-substituted glutathione + a halide anion + H(+). Functionally, may be involved in the conjugation of reduced glutathione to a wide number of exogenous and endogenous hydrophobic electrophiles and have a detoxification role against certain herbicides. In Arabidopsis thaliana (Mouse-ear cress), this protein is Glutathione S-transferase T3 (GSTT3).